We begin with the raw amino-acid sequence, 129 residues long: M-zodatoxin-Lt8a (129 aa).

The N-terminal stretch at 1 to 20 is a signal peptide; the sequence is MKYFVVALALVAAFACIAES. Positions 21–60 are excised as a propeptide; sequence KPAESEHELAEVEEENELADLEDAVWLEHLADLSDLEEAR. The Processing quadruplet motif motif lies at 57 to 60; the sequence is EEAR.

It belongs to the cationic peptide 06 (cytoinsectotoxin) family. Post-translationally, cleavage of the propeptide depends on the processing quadruplet motif (XXXR, with at least one of X being E). Expressed by the venom gland.

It is found in the secreted. In terms of biological role, insecticidal, cytolytic and antimicrobial peptide. Has insecticidal activity against the flesh fly S.carnaria, and against the cockroach N.cinerea. Has insecticidal activity against D.melanogaster. Has hemolytic activity against human erythrocytes (EC(50)=6 uM). Has cytolytic activity against insect Sf9 cells (EC(50)=1 uM) and human leukocytes (EC(50)=3 uM). Has antibacterial activity against the Gram-positive bacteria A.globiformis VKM Ac-1112 (MIC=0.5 uM), and B.subtilis VKM B-501 (MIC=0.6-0.9 uM), and against the Gram-negative bacteria E.coli C600 (MIC=0.5 uM), E.coli DH5alpha (MIC=0.9 uM), E.coli MH1 (MIC=0.5 uM), P.aeruginosa PAO1 (MIC=1.9 uM), and P.fluorescens VKM B-894 (MIC=3.8 uM). Lacks antimicrobial activity against the Gram-positive bacteria M.luteus and S.aureus, and against the Gram-negative bacterium S.marcescens. Forms voltage-dependent, ion-permeable channels in membranes. At high concentration causes cell membrane lysis. The sequence is that of M-zodatoxin-Lt8a (cit 1-1) from Lachesana tarabaevi (Spider).